The sequence spans 33 residues: GIMDTLKNLAKTAGKGALQSLLKMASCKLSGQC.

Cys-27 and Cys-33 are oxidised to a cystine.

Expressed by the skin glands.

It localises to the secreted. Its function is as follows. Antimicrobial peptide. The polypeptide is Brevinin-2Rh (Pelophylax ridibundus (Marsh frog)).